We begin with the raw amino-acid sequence, 240 residues long: FMN-dependent NADH:quinone oxidoreductase 2 (240 aa).

Residues serine 10 and 23-25 (SIS) contribute to the FMN site.

This sequence belongs to the azoreductase type 1 family. Homodimer. It depends on FMN as a cofactor.

It catalyses the reaction 2 a quinone + NADH + H(+) = 2 a 1,4-benzosemiquinone + NAD(+). The enzyme catalyses N,N-dimethyl-1,4-phenylenediamine + anthranilate + 2 NAD(+) = 2-(4-dimethylaminophenyl)diazenylbenzoate + 2 NADH + 2 H(+). Its function is as follows. Quinone reductase that provides resistance to thiol-specific stress caused by electrophilic quinones. Also exhibits azoreductase activity. Catalyzes the reductive cleavage of the azo bond in aromatic azo compounds to the corresponding amines. This Idiomarina loihiensis (strain ATCC BAA-735 / DSM 15497 / L2-TR) protein is FMN-dependent NADH:quinone oxidoreductase 2.